The chain runs to 375 residues: GTPase HflX (375 aa).

A Hflx-type G domain is found at P194–K371. GTP contacts are provided by residues G200 to T207, F225 to T229, D246 to G249, N314 to D317, and S349 to K351. Mg(2+) is bound by residues T207 and T227.

Belongs to the TRAFAC class OBG-HflX-like GTPase superfamily. HflX GTPase family. Monomer. Associates with the 50S ribosomal subunit. It depends on Mg(2+) as a cofactor.

The protein localises to the cytoplasm. Functionally, GTPase that associates with the 50S ribosomal subunit and may have a role during protein synthesis or ribosome biogenesis. The protein is GTPase HflX of Hyperthermus butylicus (strain DSM 5456 / JCM 9403 / PLM1-5).